We begin with the raw amino-acid sequence, 139 residues long: Large ribosomal subunit protein bL17 (139 aa).

It belongs to the bacterial ribosomal protein bL17 family. As to quaternary structure, part of the 50S ribosomal subunit. Contacts protein L32.

The protein is Large ribosomal subunit protein bL17 of Azorhizobium caulinodans (strain ATCC 43989 / DSM 5975 / JCM 20966 / LMG 6465 / NBRC 14845 / NCIMB 13405 / ORS 571).